The chain runs to 279 residues: MNYNNECLSMLKLGKKTEYKSTYDPSLLQAVPRYLNRESLGIVKQQPFTVGADIWTLYELSWLNQNGVPQVAIADVIIDSSSSNIIESKSFKLYLNSFNQMRFPSREDVQRRIQSDLSKCAQGDVTVQIYKLSDFAMRSISEFNGECIDNQNICINRYDFTRESLQGIANGEIVEERLVSHLLKSNCLITSQPDWGSIQICYVGKQLDREKLLRYLVSFREHNEFHEQCVERIFCDLMEFAQPQKLTVYARYTRRGGLDINPFRSNFEGIPENLRMVRQ.

Residue 86–88 coordinates substrate; it reads IES. 88–89 lines the NADPH pocket; that stretch reads SK. The active-site Thioimide intermediate is Cys-187. The Proton donor role is filled by Asp-194. Substrate is bound at residue 226–227; it reads HE. 255 to 256 provides a ligand contact to NADPH; sequence RG.

Belongs to the GTP cyclohydrolase I family. QueF type 2 subfamily. As to quaternary structure, homodimer.

It localises to the cytoplasm. It catalyses the reaction 7-aminomethyl-7-carbaguanine + 2 NADP(+) = 7-cyano-7-deazaguanine + 2 NADPH + 3 H(+). It functions in the pathway tRNA modification; tRNA-queuosine biosynthesis. Catalyzes the NADPH-dependent reduction of 7-cyano-7-deazaguanine (preQ0) to 7-aminomethyl-7-deazaguanine (preQ1). In Glaesserella parasuis serovar 5 (strain SH0165) (Haemophilus parasuis), this protein is NADPH-dependent 7-cyano-7-deazaguanine reductase.